The primary structure comprises 53 residues: uncharacterized protein (53 aa).

This is an uncharacterized protein from Saccharomyces cerevisiae (strain ATCC 204508 / S288c) (Baker's yeast).